The chain runs to 103 residues: Large ribosomal subunit protein uL24 (103 aa).

It belongs to the universal ribosomal protein uL24 family. In terms of assembly, part of the 50S ribosomal subunit.

In terms of biological role, one of two assembly initiator proteins, it binds directly to the 5'-end of the 23S rRNA, where it nucleates assembly of the 50S subunit. Functionally, one of the proteins that surrounds the polypeptide exit tunnel on the outside of the subunit. This is Large ribosomal subunit protein uL24 from Bacillus anthracis (strain A0248).